A 198-amino-acid chain; its full sequence is Na(+)-translocating NADH-quinone reductase subunit E (198 aa).

Helical transmembrane passes span 11–31 (SIFIENLALSFFLGMCTFLAV), 39–59 (MGLGIAVIVVQTVAVPANNLI), 77–97 (FLSFITFIGVIAALVQILEMA), 110–130 (GIFLPLITVNCAIFGGVSFMV), 140–160 (VVYGVGSGAGWMLAIVAMAGI), and 176–196 (LGITFITAGLMALGFMSFSGI).

It belongs to the NqrDE/RnfAE family. In terms of assembly, composed of six subunits; NqrA, NqrB, NqrC, NqrD, NqrE and NqrF.

It is found in the cell inner membrane. It catalyses the reaction a ubiquinone + n Na(+)(in) + NADH + H(+) = a ubiquinol + n Na(+)(out) + NAD(+). In terms of biological role, NQR complex catalyzes the reduction of ubiquinone-1 to ubiquinol by two successive reactions, coupled with the transport of Na(+) ions from the cytoplasm to the periplasm. NqrA to NqrE are probably involved in the second step, the conversion of ubisemiquinone to ubiquinol. This chain is Na(+)-translocating NADH-quinone reductase subunit E, found in Aeromonas salmonicida (strain A449).